The chain runs to 444 residues: Biotin carboxylase 2 (444 aa).

The Biotin carboxylation domain occupies 1–444 (MFTKVLIANR…VTTDFLKQHL (444 aa)). ATP contacts are provided by residues Lys-116, Lys-158, 164 to 165 (GG), 200 to 203 (EKVI), His-208, and His-235. Positions 120 to 317 (RKAMEAAGVP…LVEQQLRIAA (198 aa)) constitute an ATP-grasp domain. Lys-237 is a hydrogencarbonate binding site. ATP-binding residues include Glu-275 and Glu-288. Residues Glu-275, Glu-288, and Asn-290 each contribute to the Mg(2+) site. The Mn(2+) site is built by Glu-275, Glu-288, and Asn-290. Hydrogencarbonate is bound by residues Arg-292, Val-295, and Arg-338. Arg-292 is an active-site residue. Arg-338 provides a ligand contact to biotin.

As to quaternary structure, acetyl-CoA carboxylase is a heterohexamer of biotin carboxyl carrier protein, biotin carboxylase and the two subunits of carboxyl transferase in a 2:2 complex. Mg(2+) serves as cofactor. Mn(2+) is required as a cofactor.

The enzyme catalyses N(6)-biotinyl-L-lysyl-[protein] + hydrogencarbonate + ATP = N(6)-carboxybiotinyl-L-lysyl-[protein] + ADP + phosphate + H(+). It functions in the pathway lipid metabolism; malonyl-CoA biosynthesis; malonyl-CoA from acetyl-CoA: step 1/1. In terms of biological role, this protein is a component of the acetyl coenzyme A carboxylase complex; first, biotin carboxylase catalyzes the carboxylation of the carrier protein and then the transcarboxylase transfers the carboxyl group to form malonyl-CoA. The protein is Biotin carboxylase 2 (accC2) of Bacillus subtilis (strain 168).